The chain runs to 73 residues: uncharacterized protein (73 aa).

This is an uncharacterized protein from Vaccinia virus (strain Copenhagen) (VACV).